We begin with the raw amino-acid sequence, 451 residues long: ACT domain-containing protein ACR4 (451 aa).

4 ACT domains span residues 35 to 118 (VIRV…VIPS), 123 to 200 (VIEL…NTPR), 259 to 335 (VVTV…VSEG), and 337 to 416 (KLEL…QEQQ). Residues 409-428 (KNNPQEQQQRQKSPSHESPT) form a disordered region. Over residues 410–420 (NNPQEQQQRQK) the composition is skewed to polar residues.

As to expression, highly expressed in flowers and at lower levels in leaves and siliques.

In terms of biological role, may bind amino acids. This is ACT domain-containing protein ACR4 from Arabidopsis thaliana (Mouse-ear cress).